Consider the following 304-residue polypeptide: MKKALVIKFFMGNYLISDIETKDKITAQVKGKLKNYDTHKKELFIIKVGDIVIYENYLDRYLISEVLERHNELNRPNIANFNQVILVFSLYKPRFQFRLLDKFLLILNKYKLKIILIFTKIDLITKKKFLIIQKKISYYENFYRIYYVNSKNKNSTHHLMDIFSNKITVLAGQTGVGKSTFLNSLKPSLQLKTQEISKKLGLGKHTTKNAQLYEFNGGYIADTPGFSKLDLTIFDYEELKFFYPDFLLYSDKCYFKKDCSHIKEINCGVKKALKLSLIPDWRYDNYLKFIEKIQEQKKLNYNKK.

The CP-type G domain occupies 70-229; the sequence is HNELNRPNIA…IADTPGFSKL (160 aa). Residues 119-122 and 172-180 contribute to the GTP site; these read TKID and GQTGVGKST. Zn(2+)-binding residues include Cys253, Cys259, His261, and Cys267.

The protein belongs to the TRAFAC class YlqF/YawG GTPase family. RsgA subfamily. Monomer. Associates with 30S ribosomal subunit, binds 16S rRNA. Requires Zn(2+) as cofactor.

It is found in the cytoplasm. Functionally, one of several proteins that assist in the late maturation steps of the functional core of the 30S ribosomal subunit. Helps release RbfA from mature subunits. May play a role in the assembly of ribosomal proteins into the subunit. Circularly permuted GTPase that catalyzes slow GTP hydrolysis, GTPase activity is stimulated by the 30S ribosomal subunit. The polypeptide is Small ribosomal subunit biogenesis GTPase RsgA (Phytoplasma mali (strain AT)).